Consider the following 688-residue polypeptide: Glycine--tRNA ligase beta subunit (688 aa).

It belongs to the class-II aminoacyl-tRNA synthetase family. Tetramer of two alpha and two beta subunits.

Its subcellular location is the cytoplasm. It catalyses the reaction tRNA(Gly) + glycine + ATP = glycyl-tRNA(Gly) + AMP + diphosphate. The polypeptide is Glycine--tRNA ligase beta subunit (Actinobacillus pleuropneumoniae serotype 7 (strain AP76)).